The primary structure comprises 541 residues: Periplasmic oligopeptide-binding protein OppA (541 aa).

The N-terminal stretch at 1–20 (MQHKLLFSAIALALSYSAQA) is a signal peptide.

The protein belongs to the bacterial solute-binding protein 5 family. The complex is composed of two ATP-binding proteins (OppD and OppF), two transmembrane proteins (OppB and OppC) and a solute-binding protein (OppA).

It is found in the periplasm. In terms of biological role, part of the ABC transporter complex OppABCDF involved in the uptake of oligopeptides. Plays an important nutritional role. Binds peptides containing from two to five amino acid residues. This Haemophilus influenzae (strain ATCC 51907 / DSM 11121 / KW20 / Rd) protein is Periplasmic oligopeptide-binding protein OppA (oppA).